Consider the following 350-residue polypeptide: C5a anaphylatoxin chemotactic receptor 1 (350 aa).

Residues 1 to 36 (APMENSTYDYTNYDSLGTLDPSTPVDNTVRRLRPTT) are Extracellular-facing. Asn5 is a glycosylation site (N-linked (GlcNAc...) asparagine). Tyr10 and Tyr13 each carry sulfotyrosine. A helical transmembrane segment spans residues 37–63 (IVALVIYMAVFLVGVPGNALVVWVTAL). Over 64–68 (EAKRT) the chain is Cytoplasmic. The helical transmembrane segment at 69-92 (VNAIWFLNLAVADLLSCLALPILF) threads the bilayer. At 93–109 (VSIIQEGHWPFGRAACS) the chain is on the extracellular side. A disulfide bridge connects residues Cys108 and Cys187. The chain crosses the membrane as a helical span at residues 110–131 (VLPSLILLNMYASILLLATISA). Over 132 to 152 (DRFLLVFNPIWCQNTRGAGLA) the chain is Cytoplasmic. The helical transmembrane segment at 153 to 173 (WLACCVAWGLALLLTIPSFLY) threads the bilayer. The Extracellular segment spans residues 174-200 (RKVLQDDYPPKTTCGVDYGHEGVRAER). A helical membrane pass occupies residues 201 to 226 (AVAIVRLVVGFLLPLFTLSVCYTFLL). The Cytoplasmic segment spans residues 227–242 (LRTWSRNGTRSTKTLK). The chain crosses the membrane as a helical span at residues 243–265 (VVVAVVVSFFIFWLPYQVMGMIL). Residues 266-282 (ALLHPSSATFRWAIRLD) are Extracellular-facing. A helical transmembrane segment spans residues 283–303 (PLCIALAYVNCCINPIIYVVA). Topologically, residues 304–350 (GKGFQGQLRKSLPSLLRNVLAEESVIQGSKSFSRSTVDTVADKCQAV) are cytoplasmic. Residues Ser314, Ser317, Ser327, Ser332, Ser334, and Ser338 each carry the phosphoserine modification.

This sequence belongs to the G-protein coupled receptor 1 family. Homodimer. May also form higher-order oligomers. Interacts (when phosphorylated) with ARRB1 and ARRB2; the interaction is associated with internalization of C5aR. Post-translationally, sulfation plays a critical role in the association of C5aR with C5a, but no significant role in the ability of the receptor to transduce a signal and mobilize calcium in response to a small peptide agonist. In terms of processing, phosphorylated on serine residues in response to C5a binding, resulting in internalization of the receptor and short-term desensitization to C5a.

The protein resides in the cell membrane. It localises to the cytoplasmic vesicle. Functionally, receptor for the chemotactic and inflammatory peptide anaphylatoxin C5a. The ligand interacts with at least two sites on the receptor: a high-affinity site on the extracellular N-terminus, and a second site in the transmembrane region which activates downstream signaling events. Receptor activation stimulates chemotaxis, granule enzyme release, intracellular calcium release and superoxide anion production. The protein is C5a anaphylatoxin chemotactic receptor 1 (C5AR1) of Oryctolagus cuniculus (Rabbit).